Reading from the N-terminus, the 417-residue chain is Glutamyl-tRNA reductase (417 aa).

Substrate is bound by residues 49-52, Ser-109, 114-116, and Gln-120; these read TCNR and ESQ. Cys-50 functions as the Nucleophile in the catalytic mechanism. NADP(+) is bound at residue 189 to 194; sequence GLGEIG.

This sequence belongs to the glutamyl-tRNA reductase family. Homodimer.

It carries out the reaction (S)-4-amino-5-oxopentanoate + tRNA(Glu) + NADP(+) = L-glutamyl-tRNA(Glu) + NADPH + H(+). It functions in the pathway porphyrin-containing compound metabolism; protoporphyrin-IX biosynthesis; 5-aminolevulinate from L-glutamyl-tRNA(Glu): step 1/2. In terms of biological role, catalyzes the NADPH-dependent reduction of glutamyl-tRNA(Glu) to glutamate 1-semialdehyde (GSA). The sequence is that of Glutamyl-tRNA reductase from Streptococcus sanguinis (strain SK36).